The following is a 329-amino-acid chain: Capsular polysaccharide phosphotransferase WcwK (329 aa).

This sequence belongs to the stealth family.

This chain is Capsular polysaccharide phosphotransferase WcwK (wcwK), found in Streptococcus pneumoniae.